Here is a 236-residue protein sequence, read N- to C-terminus: Chloride intracellular channel protein 3 (236 aa).

Residues 1 to 88 (MAETKLQLFV…EDFLEETLGP (88 aa)) are required for insertion into the membrane. The GST N-terminal domain occupies 12–90 (ASEDGESVGH…FLEETLGPPD (79 aa)). The short motif at 22 to 25 (CPSC) is the G-site element. Cys-22 and Cys-25 form a disulfide bridge. Residues 24-44 (SCQRLFMVLLLKGVPFTLTTV) form a helical membrane-spanning segment. Ser-49 and Ser-159 each carry phosphoserine. Residues 68 to 235 (DSDAKTDTLQ…LAAYRPAVHP (168 aa)) enclose the GST C-terminal domain.

It belongs to the chloride channel CLIC family. As to quaternary structure, associated with the C-terminal of MAPK15. In terms of tissue distribution, detected in placenta (at protein level). Widely expressed. High expression is found in placenta followed by lung and heart. Low expression in skeletal muscle, kidney and pancreas.

It is found in the nucleus. It localises to the membrane. The protein localises to the cell membrane. Its subcellular location is the cytoplasm. The protein resides in the secreted. It is found in the extracellular space. It localises to the extracellular matrix. The enzyme catalyses chloride(in) = chloride(out). With respect to regulation, inhibited by rapamycin, amphotericin B and IAA-94. In terms of biological role, in the soluble state, catalyzes glutaredoxin-like thiol disulfide exchange reactions with reduced glutathione as electron donor. Reduced in a glutathione-dependent way and secreted into the extracellular matrix where it activates TGM2 and promotes blood vessel growth during tissue remodeling as occurs in tumorigenesis. Can reduce specific cysteines in TGM2 and regulate cofactor binding. Can insert into membranes and form outwardly rectifying chloride ion channels. May participate in cellular growth control. In Homo sapiens (Human), this protein is Chloride intracellular channel protein 3.